Reading from the N-terminus, the 341-residue chain is Glucokinase (341 aa).

18 to 23 contributes to the ATP binding site; the sequence is GDIGGT.

Belongs to the bacterial glucokinase family.

It localises to the cytoplasm. The catalysed reaction is D-glucose + ATP = D-glucose 6-phosphate + ADP + H(+). This is Glucokinase from Mesorhizobium japonicum (strain LMG 29417 / CECT 9101 / MAFF 303099) (Mesorhizobium loti (strain MAFF 303099)).